We begin with the raw amino-acid sequence, 425 residues long: (S)-6-hydroxynicotine oxidase (425 aa).

Residues serine 12, glutamate 31, 38-39 (GR), and 56-59 (GGAY) contribute to the FAD site. Asparagine 166 is a binding site for (S)-6-hydroxynicotine. Residue valine 226 participates in FAD binding. (S)-6-hydroxynicotine contacts are provided by tyrosine 311, phenylalanine 326, and tryptophan 371. FAD contacts are provided by residues serine 398 and 406–408 (GYI). Tyrosine 407 is a (S)-6-hydroxynicotine binding site.

The protein belongs to the flavin monoamine oxidase family. Homodimer. FAD is required as a cofactor.

It is found in the cytoplasm. The enzyme catalyses (S)-6-hydroxynicotine + O2 + H2O = 6-hydroxypseudooxynicotine + H2O2. It catalyses the reaction (S)-6-hydroxynicotine + O2 = 6-hydroxy-N-methylmyosmine + H2O2. It participates in alkaloid degradation; nicotine degradation; 6-hydroxypseudooxynicotine from nicotine (S-isomer route): step 2/2. Inhibited by (R)-6-hydroxynicotine. Inhibited by high concentrations of phenanthroline. Activity is strongly affected by Hg(2+) and p-chloromercuriphenylsulfonate, but not by N-ethylmaleimide and 5,5'-dithiobis-(2-nitrobenzoate). Involved in the degradation of L-nicotine. Catalyzes the oxidation of (S)-6-hydroxynicotine (6-hydroxy-L-nicotine) to 6-hydroxypseudooxynicotine. Oxidation of the pyrrolidine ring of (S)-6-hydroxynicotine leads to the formation of the optically inactive 6-hydroxy-N-methylmyosmine, which hydrolyzes spontaneously to 6-hydroxypseudooxynicotine. Acts with absolute stereospecificity on the L-form of 6-hydroxynicotine. Can also use (S)-6-hydroxynornicotine. The sequence is that of (S)-6-hydroxynicotine oxidase from Paenarthrobacter nicotinovorans (Arthrobacter nicotinovorans).